The sequence spans 398 residues: 1-deoxy-D-xylulose 5-phosphate reductoisomerase (398 aa).

NADPH contacts are provided by Thr-10, Gly-11, Ser-12, Ile-13, and Asn-124. Residue Lys-125 participates in 1-deoxy-D-xylulose 5-phosphate binding. Residue Glu-126 participates in NADPH binding. Asp-150 contributes to the Mn(2+) binding site. 1-deoxy-D-xylulose 5-phosphate-binding residues include Ser-151, Glu-152, Ser-186, and His-209. Glu-152 lines the Mn(2+) pocket. Residue Gly-215 coordinates NADPH. Positions 222, 227, 228, and 231 each coordinate 1-deoxy-D-xylulose 5-phosphate. Glu-231 serves as a coordination point for Mn(2+).

This sequence belongs to the DXR family. It depends on Mg(2+) as a cofactor. Mn(2+) is required as a cofactor.

The enzyme catalyses 2-C-methyl-D-erythritol 4-phosphate + NADP(+) = 1-deoxy-D-xylulose 5-phosphate + NADPH + H(+). It participates in isoprenoid biosynthesis; isopentenyl diphosphate biosynthesis via DXP pathway; isopentenyl diphosphate from 1-deoxy-D-xylulose 5-phosphate: step 1/6. Functionally, catalyzes the NADPH-dependent rearrangement and reduction of 1-deoxy-D-xylulose-5-phosphate (DXP) to 2-C-methyl-D-erythritol 4-phosphate (MEP). The sequence is that of 1-deoxy-D-xylulose 5-phosphate reductoisomerase from Tolumonas auensis (strain DSM 9187 / NBRC 110442 / TA 4).